The sequence spans 769 residues: 4-hydroxybenzoyl-CoA reductase subunit alpha (769 aa).

Mo-molybdopterin cytosine dinucleotide is bound by residues glutamine 214, 244–245, 522–526, 650–655, and 722–725; these read GF, SSRVT, VGKALN, and KEAS.

It belongs to the xanthine dehydrogenase family. As to quaternary structure, heterohexamer of two alpha, two beta and two gamma subunits. Mo-molybdopterin cytosine dinucleotide is required as a cofactor. Post-translationally, the N-terminus is blocked.

The catalysed reaction is oxidized 2[4Fe-4S]-[ferredoxin] + benzoyl-CoA + H2O = 4-hydroxybenzoyl-CoA + reduced 2[4Fe-4S]-[ferredoxin] + 2 H(+). With respect to regulation, inactivated by low concentrations of cyanide in vitro. In terms of biological role, component of a complex that catalyzes the reductive dehydroxylation of 4-hydroxybenzoyl-CoA to benzoyl-CoA. Reaction is not reversible. Is a key enzyme in the anaerobic degradation of phenolic compounds. In Thauera aromatica, this protein is 4-hydroxybenzoyl-CoA reductase subunit alpha (hcrA).